We begin with the raw amino-acid sequence, 280 residues long: Ribonuclease Z (280 aa).

His-61, His-63, Asp-65, His-66, His-153, Asp-176, and His-240 together coordinate Zn(2+). Asp-65 functions as the Proton acceptor in the catalytic mechanism.

Belongs to the RNase Z family. In terms of assembly, homodimer. The cofactor is Zn(2+).

It catalyses the reaction Endonucleolytic cleavage of RNA, removing extra 3' nucleotides from tRNA precursor, generating 3' termini of tRNAs. A 3'-hydroxy group is left at the tRNA terminus and a 5'-phosphoryl group is left at the trailer molecule.. In terms of biological role, zinc phosphodiesterase, which displays some tRNA 3'-processing endonuclease activity. Probably involved in tRNA maturation, by removing a 3'-trailer from precursor tRNA. This Mycobacterium bovis (strain BCG / Pasteur 1173P2) protein is Ribonuclease Z.